Here is a 508-residue protein sequence, read N- to C-terminus: Glycerol kinase (508 aa).

Threonine 15 contacts ADP. ATP is bound by residues threonine 15, serine 16, and serine 17. Residue threonine 15 participates in sn-glycerol 3-phosphate binding. Position 19 (arginine 19) interacts with ADP. Positions 85, 86, 138, and 251 each coordinate sn-glycerol 3-phosphate. Glycerol-binding residues include arginine 85, glutamate 86, tyrosine 138, aspartate 251, and glutamine 252. 3 residues coordinate ADP: threonine 273, glycine 317, and glycine 419. ATP is bound by residues threonine 273, glycine 317, and glycine 419.

The protein belongs to the FGGY kinase family.

It carries out the reaction glycerol + ATP = sn-glycerol 3-phosphate + ADP + H(+). Its pathway is polyol metabolism; glycerol degradation via glycerol kinase pathway; sn-glycerol 3-phosphate from glycerol: step 1/1. Inhibited by fructose 1,6-bisphosphate (FBP). Functionally, key enzyme in the regulation of glycerol uptake and metabolism. Catalyzes the phosphorylation of glycerol to yield sn-glycerol 3-phosphate. The polypeptide is Glycerol kinase (Mycoplasma pneumoniae (strain ATCC 29342 / M129 / Subtype 1) (Mycoplasmoides pneumoniae)).